The chain runs to 432 residues: MPAIVLIGAQWGDEGKGKATDLLGGRVQWVVRYQGGNNAGHTVVLPTGENFALHLIPSGVLTPGVTNVIGNGVVIDPGVLLNELRGLQDRGVDTAKLLISADAHLLMPYHIAIDKVTERYMGSKKIGTTGRGIGPCYQDKIARIGIRVADVLDPEQLTHKVEAACEFKNQVLVKIYNRKALDPAQVVDALLEQAEGFKHRIADTRLLLNAALEAGETVLLEGSQGTLLDVDHGTYPYVTSSNPTAGGAAVGSGIGPTRIGTVLGILKAYTTRVGSGPFPTELFDEHGEYLSKTGREFGVTTGRRRRCGWFDAVIARYAARVNGITDYFLTKLDVLSSLESVPVCVGYEIDGRRTRDMPMTQRDLCRAKPVYEELPGWWEDISGAREFDDLPAKARDYVLRLEQLAGAPVSCIGVGPGREQTIVRRDVLQDRP.

Residues Gly12 to Lys18 and Gly40 to Thr42 each bind GTP. Asp13 serves as the catalytic Proton acceptor. The Mg(2+) site is built by Asp13 and Gly40. Residues Asp13–Lys16, Asn38–His41, Thr129, Arg143, Gln224, Thr239, and Arg303 contribute to the IMP site. Residue His41 is the Proton donor of the active site. Substrate is bound at residue Val299–Arg305. GTP is bound by residues Arg305, Lys331–Asp333, and Gly413–Gly415.

It belongs to the adenylosuccinate synthetase family. As to quaternary structure, homodimer. The cofactor is Mg(2+).

The protein resides in the cytoplasm. It catalyses the reaction IMP + L-aspartate + GTP = N(6)-(1,2-dicarboxyethyl)-AMP + GDP + phosphate + 2 H(+). It functions in the pathway purine metabolism; AMP biosynthesis via de novo pathway; AMP from IMP: step 1/2. Plays an important role in the de novo pathway of purine nucleotide biosynthesis. Catalyzes the first committed step in the biosynthesis of AMP from IMP. The polypeptide is Adenylosuccinate synthetase (Mycobacterium tuberculosis (strain CDC 1551 / Oshkosh)).